Reading from the N-terminus, the 372-residue chain is N-methyl-L-tryptophan oxidase (372 aa).

Position 4 to 34 (4 to 34 (DLIIIGSGSVGAAAGYYATRAGLKVLMTDAH)) interacts with FAD. Position 307 is an S-8alpha-FAD cysteine (Cys-307).

It belongs to the MSOX/MTOX family. MTOX subfamily. In terms of assembly, monomer. The cofactor is FAD.

The catalysed reaction is N(alpha)-methyl-L-tryptophan + O2 + H2O = L-tryptophan + formaldehyde + H2O2. Catalyzes the oxidative demethylation of N-methyl-L-tryptophan. The polypeptide is N-methyl-L-tryptophan oxidase (Salmonella heidelberg (strain SL476)).